The chain runs to 245 residues: Flavin-dependent thymidylate synthase (245 aa).

The ThyX domain maps to I5–K210. Residues S59, R83–R85, and Q91 contribute to the FAD site. DUMP-binding positions include Q80–R83, Q91–R95, and R149. A ThyX motif motif is present at residues R83–S93. Residues N165–R167 and H171 contribute to the FAD site. R176 contacts dUMP. R176 acts as the Involved in ionization of N3 of dUMP, leading to its activation in catalysis.

The protein belongs to the thymidylate synthase ThyX family. Homotetramer. Requires FAD as cofactor.

It carries out the reaction dUMP + (6R)-5,10-methylene-5,6,7,8-tetrahydrofolate + NADPH + H(+) = dTMP + (6S)-5,6,7,8-tetrahydrofolate + NADP(+). It participates in pyrimidine metabolism; dTTP biosynthesis. Functionally, catalyzes the reductive methylation of 2'-deoxyuridine-5'-monophosphate (dUMP) to 2'-deoxythymidine-5'-monophosphate (dTMP) while utilizing 5,10-methylenetetrahydrofolate (mTHF) as the methyl donor, and NADPH and FADH(2) as the reductant. This is Flavin-dependent thymidylate synthase from Thermococcus onnurineus (strain NA1).